The chain runs to 430 residues: Tyrosine--tRNA ligase (430 aa).

An L-tyrosine-binding site is contributed by Tyr-32. Residues 37–46 (PTADSLHIGH) carry the 'HIGH' region motif. Residues Tyr-172 and Gln-176 each coordinate L-tyrosine. The 'KMSKS' region signature appears at 232-236 (KFGKT). Lys-235 contacts ATP. The region spanning 362-429 (IKAVDLCTEK…GKKNYYLLIA (68 aa)) is the S4 RNA-binding domain.

Belongs to the class-I aminoacyl-tRNA synthetase family. TyrS type 1 subfamily. Homodimer.

It localises to the cytoplasm. It catalyses the reaction tRNA(Tyr) + L-tyrosine + ATP = L-tyrosyl-tRNA(Tyr) + AMP + diphosphate + H(+). In terms of biological role, catalyzes the attachment of tyrosine to tRNA(Tyr) in a two-step reaction: tyrosine is first activated by ATP to form Tyr-AMP and then transferred to the acceptor end of tRNA(Tyr). In Parabacteroides distasonis (strain ATCC 8503 / DSM 20701 / CIP 104284 / JCM 5825 / NCTC 11152), this protein is Tyrosine--tRNA ligase.